Consider the following 318-residue polypeptide: Deoxyhypusine hydroxylase (318 aa).

4 residues coordinate Fe cation: H65, E66, H98, and E99. HEAT-like PBS-type repeat units follow at residues 96 to 122, 194 to 220, 225 to 251, and 258 to 284; these read VRHE…YYKE, YRYR…GFKD, FRHE…VLEN, and VRHE…FSKD. Fe cation contacts are provided by H227, E228, H260, and E261.

Belongs to the deoxyhypusine hydroxylase family. Fe(2+) serves as cofactor.

Its subcellular location is the cytoplasm. The protein resides in the nucleus. The enzyme catalyses [eIF5A protein]-deoxyhypusine + AH2 + O2 = [eIF5A protein]-hypusine + A + H2O. It participates in protein modification; eIF5A hypusination. In terms of biological role, catalyzes the hydroxylation of the N(6)-(4-aminobutyl)-L-lysine intermediate to form hypusine, an essential post-translational modification only found in mature eIF-5A factor. In Schizosaccharomyces pombe (strain 972 / ATCC 24843) (Fission yeast), this protein is Deoxyhypusine hydroxylase (lia1).